Here is a 260-residue protein sequence, read N- to C-terminus: Putative ABC transporter ATP-binding protein SCO3161 (260 aa).

Residues 16-246 (LDVSGLAFAY…DDLMRAHRLE (231 aa)) enclose the ABC transporter domain. 49-56 (GPNGAGKT) contributes to the ATP binding site.

This sequence belongs to the ABC transporter superfamily.

The protein resides in the cell membrane. In terms of biological role, probably part of an ABC transporter complex. Responsible for energy coupling to the transport system. In Streptomyces coelicolor (strain ATCC BAA-471 / A3(2) / M145), this protein is Putative ABC transporter ATP-binding protein SCO3161.